A 639-amino-acid polypeptide reads, in one-letter code: 1-deoxy-D-xylulose-5-phosphate synthase (639 aa).

Thiamine diphosphate is bound by residues His76 and 117–119 (AHS). Asp148 provides a ligand contact to Mg(2+). Thiamine diphosphate is bound by residues 149–150 (GS), Asn181, Tyr288, and Glu370. Residue Asn181 participates in Mg(2+) binding.

Belongs to the transketolase family. DXPS subfamily. In terms of assembly, homodimer. The cofactor is Mg(2+). Requires thiamine diphosphate as cofactor.

The enzyme catalyses D-glyceraldehyde 3-phosphate + pyruvate + H(+) = 1-deoxy-D-xylulose 5-phosphate + CO2. It participates in metabolic intermediate biosynthesis; 1-deoxy-D-xylulose 5-phosphate biosynthesis; 1-deoxy-D-xylulose 5-phosphate from D-glyceraldehyde 3-phosphate and pyruvate: step 1/1. Its function is as follows. Catalyzes the acyloin condensation reaction between C atoms 2 and 3 of pyruvate and glyceraldehyde 3-phosphate to yield 1-deoxy-D-xylulose-5-phosphate (DXP). The protein is 1-deoxy-D-xylulose-5-phosphate synthase of Leptothrix cholodnii (strain ATCC 51168 / LMG 8142 / SP-6) (Leptothrix discophora (strain SP-6)).